The primary structure comprises 34 residues: Calcitonin-like peptide 2 (34 aa).

Residues Cys2 and Cys7 are joined by a disulfide bond. Phe34 is subject to Phenylalanine amide.

This Odorrana schmackeri (Schmacker's frog) protein is Calcitonin-like peptide 2.